The following is a 483-amino-acid chain: Altronate oxidoreductase (483 aa).

18–29 lines the NAD(+) pocket; it reads IIQFGEGNFLRA.

This sequence belongs to the mannitol dehydrogenase family. UxaB subfamily.

The enzyme catalyses D-altronate + NAD(+) = keto-D-tagaturonate + NADH + H(+). It functions in the pathway carbohydrate metabolism; pentose and glucuronate interconversion. The polypeptide is Altronate oxidoreductase (Yersinia pestis).